A 174-amino-acid chain; its full sequence is Small ribosomal subunit protein uS5c (174 aa).

The 64-residue stretch at 17 to 80 folds into the S5 DRBM domain; it reads WEERVVQVKR…TDAKKHLVTV (64 aa).

Belongs to the universal ribosomal protein uS5 family. In terms of assembly, part of the 30S ribosomal subunit. Contacts protein S4.

It localises to the plastid. Its subcellular location is the chloroplast. Functionally, with S4 and S12 plays an important role in translational accuracy. The chain is Small ribosomal subunit protein uS5c (rps5) from Pyropia yezoensis (Susabi-nori).